The following is a 197-amino-acid chain: Small ribosomal subunit protein uS4c (197 aa).

One can recognise an S4 RNA-binding domain in the interval 82–143; it reads MRLDNILFRL…KQRSKALIQN (62 aa).

It belongs to the universal ribosomal protein uS4 family. As to quaternary structure, part of the 30S ribosomal subunit. Contacts protein S5. The interaction surface between S4 and S5 is involved in control of translational fidelity.

The protein localises to the plastid. It is found in the chloroplast. Its function is as follows. One of the primary rRNA binding proteins, it binds directly to 16S rRNA where it nucleates assembly of the body of the 30S subunit. With S5 and S12 plays an important role in translational accuracy. In Gladiolus papilio (Goldblotch gladiolus), this protein is Small ribosomal subunit protein uS4c (rps4).